The primary structure comprises 72 residues: DNA-directed RNA polymerase subunit omega (72 aa).

It belongs to the RNA polymerase subunit omega family. In terms of assembly, the RNAP catalytic core consists of 2 alpha, 1 beta, 1 beta' and 1 omega subunit. When a sigma factor is associated with the core the holoenzyme is formed, which can initiate transcription.

The catalysed reaction is RNA(n) + a ribonucleoside 5'-triphosphate = RNA(n+1) + diphosphate. Functionally, promotes RNA polymerase assembly. Latches the N- and C-terminal regions of the beta' subunit thereby facilitating its interaction with the beta and alpha subunits. The sequence is that of DNA-directed RNA polymerase subunit omega from Campylobacter lari (strain RM2100 / D67 / ATCC BAA-1060).